The chain runs to 79 residues: Polcalcin Bra r 1 (79 aa).

EF-hand domains are found at residues 1 to 36 (MADA…LGSV) and 39 to 71 (DDVT…NPGL). Asp14, Asp16, Asp18, Lys20, Glu25, Asp49, Asp51, Asp53, Asn55, and Glu60 together coordinate Ca(2+).

The sequence is that of Polcalcin Bra r 1 from Brassica campestris (Field mustard).